Here is a 265-residue protein sequence, read N- to C-terminus: Cytochrome b-c1 complex subunit Rieske, mitochondrial (265 aa).

The transit peptide at Met-1–Phe-53 directs the protein to the mitochondrion. Residues Ser-54–Arg-102 lie on the Mitochondrial matrix side of the membrane. A helical transmembrane segment spans residues Ala-103–Leu-125. Residues Lys-126 to Gly-265 are Mitochondrial intermembrane-facing. The 89-residue stretch at Ile-175–Leu-263 folds into the Rieske domain. Residues Cys-208, His-210, Cys-227, and His-230 each coordinate [2Fe-2S] cluster. A disulfide bridge connects residues Cys-213 and Cys-229.

Belongs to the Rieske iron-sulfur protein family. In terms of assembly, component of the ubiquinol-cytochrome c oxidoreductase (cytochrome b-c1 complex, complex III, CIII), a multisubunit enzyme composed of 3 respiratory subunits cytochrome b, cytochrome c1 and Rieske protein, 2 core protein subunits, and several low-molecular weight protein subunits. The complex exists as an obligatory dimer and forms supercomplexes (SCs) in the inner mitochondrial membrane with cytochrome c oxidase (complex IV, CIV). The cofactor is [2Fe-2S] cluster.

It localises to the mitochondrion inner membrane. It carries out the reaction a quinol + 2 Fe(III)-[cytochrome c](out) = a quinone + 2 Fe(II)-[cytochrome c](out) + 2 H(+)(out). Functionally, component of the ubiquinol-cytochrome c oxidoreductase, a multisubunit transmembrane complex that is part of the mitochondrial electron transport chain which drives oxidative phosphorylation. The respiratory chain contains 3 multisubunit complexes succinate dehydrogenase (complex II, CII), ubiquinol-cytochrome c oxidoreductase (cytochrome b-c1 complex, complex III, CIII) and cytochrome c oxidase (complex IV, CIV), that cooperate to transfer electrons derived from NADH and succinate to molecular oxygen, creating an electrochemical gradient over the inner membrane that drives transmembrane transport and the ATP synthase. The cytochrome b-c1 complex catalyzes electron transfer from ubiquinol to cytochrome c, linking this redox reaction to translocation of protons across the mitochondrial inner membrane, with protons being carried across the membrane as hydrogens on the quinol. In the process called Q cycle, 2 protons are consumed from the matrix, 4 protons are released into the intermembrane space and 2 electrons are passed to cytochrome c. The Rieske protein is a catalytic core subunit containing a [2Fe-2S] iron-sulfur cluster. It cycles between 2 conformational states during catalysis to transfer electrons from the quinol bound in the Q(0) site in cytochrome b to cytochrome c1. The polypeptide is Cytochrome b-c1 complex subunit Rieske, mitochondrial (FES1) (Solanum tuberosum (Potato)).